The following is a 440-amino-acid chain: Streptokinase A (440 aa).

An N-terminal signal peptide occupies residues 1–26 (MKNYLSIGVIALLFALTFGTVKSVQA).

Functionally, this protein is not a protease, but it activates plasminogen by complexing with it. As a potential virulence factor, it is thought to prevent the formation of effective fibrin barriers around the site of infection, thereby contributing to the invasiveness of the cells. The chain is Streptokinase A (ska) from Streptococcus pyogenes serotype M1.